Here is a 337-residue protein sequence, read N- to C-terminus: Nicotinate-nucleotide--dimethylbenzimidazole phosphoribosyltransferase (337 aa).

The Proton acceptor role is filled by E305.

The protein belongs to the CobT family.

The catalysed reaction is 5,6-dimethylbenzimidazole + nicotinate beta-D-ribonucleotide = alpha-ribazole 5'-phosphate + nicotinate + H(+). The protein operates within nucleoside biosynthesis; alpha-ribazole biosynthesis; alpha-ribazole from 5,6-dimethylbenzimidazole: step 1/2. Functionally, catalyzes the synthesis of alpha-ribazole-5'-phosphate from nicotinate mononucleotide (NAMN) and 5,6-dimethylbenzimidazole (DMB). The chain is Nicotinate-nucleotide--dimethylbenzimidazole phosphoribosyltransferase from Roseobacter denitrificans (strain ATCC 33942 / OCh 114) (Erythrobacter sp. (strain OCh 114)).